The chain runs to 116 residues: Large ribosomal subunit protein uL22 (116 aa).

Belongs to the universal ribosomal protein uL22 family. As to quaternary structure, part of the 50S ribosomal subunit.

In terms of biological role, this protein binds specifically to 23S rRNA; its binding is stimulated by other ribosomal proteins, e.g. L4, L17, and L20. It is important during the early stages of 50S assembly. It makes multiple contacts with different domains of the 23S rRNA in the assembled 50S subunit and ribosome. Its function is as follows. The globular domain of the protein is located near the polypeptide exit tunnel on the outside of the subunit, while an extended beta-hairpin is found that lines the wall of the exit tunnel in the center of the 70S ribosome. In Sulfurihydrogenibium sp. (strain YO3AOP1), this protein is Large ribosomal subunit protein uL22.